A 307-amino-acid chain; its full sequence is Ribonuclease Z (307 aa).

Histidine 61, histidine 63, aspartate 65, histidine 66, histidine 138, aspartate 208, and histidine 264 together coordinate Zn(2+). Aspartate 65 (proton acceptor) is an active-site residue.

It belongs to the RNase Z family. In terms of assembly, homodimer. It depends on Zn(2+) as a cofactor.

It catalyses the reaction Endonucleolytic cleavage of RNA, removing extra 3' nucleotides from tRNA precursor, generating 3' termini of tRNAs. A 3'-hydroxy group is left at the tRNA terminus and a 5'-phosphoryl group is left at the trailer molecule.. In terms of biological role, zinc phosphodiesterase, which displays some tRNA 3'-processing endonuclease activity. Probably involved in tRNA maturation, by removing a 3'-trailer from precursor tRNA. The sequence is that of Ribonuclease Z from Pyrococcus abyssi (strain GE5 / Orsay).